We begin with the raw amino-acid sequence, 352 residues long: MENGGRPSLCQFILLGTTSVVTAALYSVYRQKAWVSQELKGAKKVHLGEDLKSILSEAPGKCVPYAVIEGAVRSVKETLNSQFVENCKGVIQRLTLQEHKMVWNRTTHLWNDCSKIIHQRTNTVPFDLVPHEDGVDVAVRVLKPLDSVDLGLEAVYEKFHPSIQSFTDVIGHYISGERPKGIQETEEMLKVGATLTGVGELVLDNNSVRLQPPKQGMQYYLSSQDFDSLLQRQESSVRLWKVLALVFGFATCATLFFILRKQYLQRQERLRLKQMQEEFQEHEAQLLSRAKPEDRESLKSACVVCLSSFKSCVFLECGHVCSCTECYRALPEPKKCPICRQAITRVIPLYNS.

Residues 1-8 (MENGGRPS) lie on the Cytoplasmic side of the membrane. Residues 9-29 (LCQFILLGTTSVVTAALYSVY) traverse the membrane as a helical segment. Over 30–238 (RQKAWVSQEL…LLQRQESSVR (209 aa)) the chain is Mitochondrial intermembrane. Residue Lys52 forms a Glycyl lysine isopeptide (Lys-Gly) (interchain with G-Cter in ubiquitin) linkage. Residues 239 to 259 (LWKVLALVFGFATCATLFFIL) traverse the membrane as a helical segment. Residues 260-352 (RKQYLQRQER…ITRVIPLYNS (93 aa)) lie on the Cytoplasmic side of the membrane. Glycyl lysine isopeptide (Lys-Gly) (interchain with G-Cter in ubiquitin) cross-links involve residues Lys273 and Lys299. Residues 302–340 (CVVCLSSFKSCVFLECGHVCSCTECYRALPEPKKCPICR) form an RING-type zinc finger.

Homooligomer. Interacts with MAP3K7/TAK1. Interacts with UBC9. Interacts with and sumoylates DNM1L. Interacts with MAVS. Interacts with TP53 (via N-terminus); the interaction leads to ubiquitination and proteasomal degradation of TP53. In terms of processing, ubiquitinated by PRKN during mitophagy, leading to its degradation and enhancement of mitophagy. Deubiquitinated by USP30.

Its subcellular location is the mitochondrion outer membrane. The protein resides in the peroxisome. It catalyses the reaction S-ubiquitinyl-[E2 ubiquitin-conjugating enzyme]-L-cysteine + [acceptor protein]-L-lysine = [E2 ubiquitin-conjugating enzyme]-L-cysteine + N(6)-ubiquitinyl-[acceptor protein]-L-lysine.. The protein operates within protein modification; protein ubiquitination. It participates in protein modification; protein sumoylation. Exhibits weak E3 ubiquitin-protein ligase activity. E3 ubiquitin ligases accept ubiquitin from an E2 ubiquitin-conjugating enzyme in the form of a thioester and then directly transfer the ubiquitin to targeted substrates. Can ubiquitinate AKT1 preferentially at 'Lys-284' involving 'Lys-48'-linked polyubiquitination and seems to be involved in regulation of Akt signaling by targeting phosphorylated Akt to proteasomal degradation. Mediates polyubiquitination of cytoplasmic TP53 at 'Lys-24' which targets TP53 for proteasomal degradation, thus reducing TP53 levels in the cytoplasm and mitochondrion. Proposed to preferentially act as a SUMO E3 ligase at physiological concentrations. Plays a role in the control of mitochondrial morphology by promoting mitochondrial fragmentation, and influences mitochondrial localization. Likely to promote mitochondrial fission through negatively regulating the mitochondrial fusion proteins MFN1 and MFN2, acting in a pathway that is parallel to the PRKN/PINK1 regulatory pathway. May also be involved in the sumoylation of the membrane fission protein DNM1L. Inhibits cell growth. When overexpressed, activates JNK through MAP3K7/TAK1 and induces caspase-dependent apoptosis. Involved in the modulation of innate immune defense against viruses by inhibiting RIGI-dependent antiviral response. Can mediate RIGI sumoylation and disrupt its polyubiquitination. The chain is Mitochondrial ubiquitin ligase activator of NFKB 1 (MUL1) from Macaca fascicularis (Crab-eating macaque).